The following is a 314-amino-acid chain: MAEAADAATLTRKYKYFYETECPDLDHLRSLSVANRWLETEFPLADDAKDVARLSGAELEFYRFLFAFLSAADDLVNVNLGDLSELFTQKDILHYYIEQESIEVVHSRVYSAIQLLLFRNDAVARAGYVEGALGDPAVRRKVDWLERRVAAAESVAEKYVLMILIEGIFFSSSFAAIAYLRTHNLFVVTCQTNDLISRDEAVHTAASCCIFDNYLGGERPPPARIYELFREAWKLSASLFGCAPRGSHILDVEAISAYVEYSADRLLAAIQLPPLFGTPPPGTDFPLALMTAEKHTNFFERRSTNYTGTVINDL.

Fe cation is bound by residues aspartate 73, glutamate 103, and histidine 106. Tyrosine 110 is a catalytic residue. A helical transmembrane segment spans residues 160-180 (VLMILIEGIFFSSSFAAIAYL). The Fe cation site is built by glutamate 166, glutamate 200, and histidine 203.

The protein belongs to the ribonucleoside diphosphate reductase small chain family. In terms of assembly, heterotetramer composed of a homodimer of the large subunit (R1) and a homodimer of the small subunit (R2). Larger multisubunit protein complex are also active, composed of (R1)n(R2)n. Requires Fe cation as cofactor.

It is found in the host membrane. It catalyses the reaction a 2'-deoxyribonucleoside 5'-diphosphate + [thioredoxin]-disulfide + H2O = a ribonucleoside 5'-diphosphate + [thioredoxin]-dithiol. Ribonucleoside-diphosphate reductase holoenzyme provides the precursors necessary for viral DNA synthesis. Allows virus growth in non-dividing cells, as well as reactivation from latency in infected hosts. Catalyzes the biosynthesis of deoxyribonucleotides from the corresponding ribonucleotides. The sequence is that of Ribonucleoside-diphosphate reductase small subunit from Bovine herpesvirus 1.1 (strain Cooper) (BoHV-1).